A 69-amino-acid polypeptide reads, in one-letter code: Cytochrome c oxidase subunit 8A, mitochondrial (69 aa).

The N-terminal 25 residues, 1-25, are a transit peptide targeting the mitochondrion; sequence MSVLTSLLLRGLTGSARRLPVPRAK. Over 26-36 the chain is Mitochondrial matrix; sequence VHSMPPEEELG. A helical membrane pass occupies residues 37 to 60; that stretch reads IMEKAIGLTFCFVSLFLPAGWILS. Topologically, residues 61-69 are mitochondrial intermembrane; it reads HLEDYKRPE.

The protein belongs to the cytochrome c oxidase VIII family. In terms of assembly, component of the cytochrome c oxidase (complex IV, CIV), a multisubunit enzyme composed of 14 subunits. The complex is composed of a catalytic core of 3 subunits MT-CO1, MT-CO2 and MT-CO3, encoded in the mitochondrial DNA, and 11 supernumerary subunits COX4I, COX5A, COX5B, COX6A, COX6B, COX6C, COX7A, COX7B, COX7C, COX8 and NDUFA4, which are encoded in the nuclear genome. The complex exists as a monomer or a dimer and forms supercomplexes (SCs) in the inner mitochondrial membrane with NADH-ubiquinone oxidoreductase (complex I, CI) and ubiquinol-cytochrome c oxidoreductase (cytochrome b-c1 complex, complex III, CIII), resulting in different assemblies (supercomplex SCI(1)III(2)IV(1) and megacomplex MCI(2)III(2)IV(2)). In terms of processing, in response to mitochondrial stress, the precursor protein is ubiquitinated by the SIFI complex in the cytoplasm before mitochondrial import, leading to its degradation. Within the SIFI complex, UBR4 initiates ubiquitin chain that are further elongated or branched by KCMF1.

The protein localises to the mitochondrion inner membrane. Its pathway is energy metabolism; oxidative phosphorylation. In terms of biological role, component of the cytochrome c oxidase, the last enzyme in the mitochondrial electron transport chain which drives oxidative phosphorylation. The respiratory chain contains 3 multisubunit complexes succinate dehydrogenase (complex II, CII), ubiquinol-cytochrome c oxidoreductase (cytochrome b-c1 complex, complex III, CIII) and cytochrome c oxidase (complex IV, CIV), that cooperate to transfer electrons derived from NADH and succinate to molecular oxygen, creating an electrochemical gradient over the inner membrane that drives transmembrane transport and the ATP synthase. Cytochrome c oxidase is the component of the respiratory chain that catalyzes the reduction of oxygen to water. Electrons originating from reduced cytochrome c in the intermembrane space (IMS) are transferred via the dinuclear copper A center (CU(A)) of subunit 2 and heme A of subunit 1 to the active site in subunit 1, a binuclear center (BNC) formed by heme A3 and copper B (CU(B)). The BNC reduces molecular oxygen to 2 water molecules using 4 electrons from cytochrome c in the IMS and 4 protons from the mitochondrial matrix. The polypeptide is Cytochrome c oxidase subunit 8A, mitochondrial (COX8A) (Macaca fascicularis (Crab-eating macaque)).